A 277-amino-acid polypeptide reads, in one-letter code: Tetrahydroxynaphthalene reductase PfmaG (277 aa).

3 residues coordinate NADP(+): I36, D82, and N109. Active-site proton donor residues include S158, S159, and Y173. Residues Y173, K177, I206, and T208 each contribute to the NADP(+) site. The active-site Lowers pKa of active site Tyr is the K177.

The protein belongs to the short-chain dehydrogenases/reductases (SDR) family.

It catalyses the reaction scytalone + NADP(+) = naphthalene-1,3,6,8-tetrol + NADPH + H(+). The protein operates within pigment biosynthesis; melanin biosynthesis. Tetrahydroxynaphthalene reductase; part of the gene cluster that mediates the biosynthesis of dihydroxynaphthalene (DHN)-melanin, a bluish-green pigment forming a dark layer in the conidial wall that protects the conidia from UV radiations. The first step of the pathway is the production of the pentaketide 1,3,6,8-tetrahydroxynaphthalene (1,3,6,8-THN or T4HN) by the polyketide synthase PfmaE though condensation of acetyl-CoA with malonyl-CoA. T4HN is not stable and easily oxidizes into the stable form flaviolin. T4HN is also substrate of the hydroxynaphthalene reductase PfmaG to yield scytalone. The scytalone dehydratase PfmaJ then reduces scytalone to 1,3,8-THN. 1,3,8-THN is then substrate of the hydroxynaphthalene reductase PfmaI to yield vermelone. Vermelone is further converted by the multicopper oxidase PfmaD to 1,8-DHN. Finally the laccase PFICI_06862 transforms 1,8-DHN to DHN-melanin. The roles of the 5-oxoprolinase PfmaA and the proline iminopeptidase PfmaB within the cluster have not been elucidated yet. In Pestalotiopsis fici (strain W106-1 / CGMCC3.15140), this protein is Tetrahydroxynaphthalene reductase PfmaG.